A 485-amino-acid polypeptide reads, in one-letter code: Probable serine/threonine-protein kinase nek1 (485 aa).

Residues 12–283 enclose the Protein kinase domain; sequence YLIKSQIGSG…TQQILEQVFI (272 aa). ATP-binding positions include 18 to 26 and lysine 41; that span reads IGSGSYGNT. Residue aspartate 136 is the Proton acceptor of the active site. Polar residues predominate over residues 354-365; it reads KNQQQQSPQKLE. Residues 354–419 are disordered; it reads KNQQQQSPQK…NNDKNNNINN (66 aa). A compositionally biased stretch (low complexity) spans 366–419; the sequence is NNNNNNNDNNNNNNNNNNNNNNNNNNNNNNNNNNNNNNNNNNNNNNDKNNNINN.

Belongs to the protein kinase superfamily. NEK Ser/Thr protein kinase family. NIMA subfamily.

It carries out the reaction L-seryl-[protein] + ATP = O-phospho-L-seryl-[protein] + ADP + H(+). It catalyses the reaction L-threonyl-[protein] + ATP = O-phospho-L-threonyl-[protein] + ADP + H(+). The polypeptide is Probable serine/threonine-protein kinase nek1 (nek1) (Dictyostelium discoideum (Social amoeba)).